The sequence spans 164 residues: MPDQLNSRVETCYQQAETFFKRTFKRPMVSFQLRGQKAGVAHLHENLLRFNPQLYKENAEDFLRQTVPHEVAHLIAHQLFGGSIQPHGEEWQLIMRGVYELPPNRCHTYAVKRRSVIRYIYRCPCPDSDFPFTAQRHSMVRKGRRYLCRRCREPLVFSGETRTE.

Residues 14–156 enclose the SprT-like domain; it reads QQAETFFKRT…LCRRCREPLV (143 aa). Residue His-69 participates in Zn(2+) binding. Residue Glu-70 is part of the active site. His-73 is a binding site for Zn(2+).

It belongs to the SprT family. Zn(2+) is required as a cofactor.

Its subcellular location is the cytoplasm. The chain is Protein SprT from Pseudomonas savastanoi pv. phaseolicola (strain 1448A / Race 6) (Pseudomonas syringae pv. phaseolicola (strain 1448A / Race 6)).